Consider the following 615-residue polypeptide: uncharacterized protein (615 aa).

Belongs to the mycobacterial PPE family.

This is an uncharacterized protein from Mycobacterium tuberculosis (strain CDC 1551 / Oshkosh).